The chain runs to 472 residues: POU domain, class 5, transcription factor 1 (472 aa).

Disordered regions lie at residues 127–154 (MPSEVKTEKDVEEYGNEENKPPSQYHLT) and 187–255 (ISQA…LTTE). A compositionally biased stretch (polar residues) spans 220 to 234 (TAQNIPSAQAQSAPR). A compositionally biased stretch (low complexity) spans 235–245 (SSGSSSGGCSN). The segment covering 246-255 (SEEEETLTTE) has biased composition (acidic residues). A POU-specific domain is found at 249–323 (EETLTTEDLE…LLQRWLNEAE (75 aa)). The segment at residues 343-402 (KRKRRTSLEGTVRSALESYFVKCPKPNTLEITHISDDLGLERDVVRVWFCNRRQKGKRLA) is a DNA-binding region (homeobox).

The protein belongs to the POU transcription factor family. Class-7 subfamily.

The protein localises to the nucleus. Its function is as follows. Involved in early development of embryos, especially in the process of gastrulation. May play an important role in establishing and specifying rhombomeric segments. Seems to be required to maintain the cells in a highly undifferentiated state. In contrast to POU2, T-POU2 lacks DNA-binding activity because of its incomplete pou domain structure. Overexpression of POU2 does not have any effect on development, whereas overexpression of t-POU2 causes developmental retardation or arrest before gastrulation. In Danio rerio (Zebrafish), this protein is POU domain, class 5, transcription factor 1 (pou5f1).